Here is a 122-residue protein sequence, read N- to C-terminus: Large ribosomal subunit protein uL14 (122 aa).

This sequence belongs to the universal ribosomal protein uL14 family. Part of the 50S ribosomal subunit. Forms a cluster with proteins L3 and L19. In the 70S ribosome, L14 and L19 interact and together make contacts with the 16S rRNA in bridges B5 and B8.

Functionally, binds to 23S rRNA. Forms part of two intersubunit bridges in the 70S ribosome. The protein is Large ribosomal subunit protein uL14 of Christiangramia forsetii (strain DSM 17595 / CGMCC 1.15422 / KT0803) (Gramella forsetii).